Here is a 411-residue protein sequence, read N- to C-terminus: Na(+)-translocating NADH-quinone reductase subunit F (411 aa).

The chain crosses the membrane as a helical span at residues 5–25; that stretch reads VILALGIAAFTVIVLVLVAII. One can recognise a 2Fe-2S ferredoxin-type domain in the interval 36–130; sequence GDITIDINDD…NMEVELPEEI (95 aa). [2Fe-2S] cluster-binding residues include cysteine 73, cysteine 79, cysteine 82, and cysteine 114. Residues 133 to 273 enclose the FAD-binding FR-type domain; sequence VKKWECTVIS…SGPFGEFFAK (141 aa). Residues 276-393 are catalytic; sequence DAEMVFIGGG…PVMNAAVIKM (118 aa).

It belongs to the NqrF family. In terms of assembly, composed of six subunits; NqrA, NqrB, NqrC, NqrD, NqrE and NqrF. [2Fe-2S] cluster serves as cofactor. It depends on FAD as a cofactor.

The protein resides in the cell inner membrane. It carries out the reaction a ubiquinone + n Na(+)(in) + NADH + H(+) = a ubiquinol + n Na(+)(out) + NAD(+). Its function is as follows. NQR complex catalyzes the reduction of ubiquinone-1 to ubiquinol by two successive reactions, coupled with the transport of Na(+) ions from the cytoplasm to the periplasm. The first step is catalyzed by NqrF, which accepts electrons from NADH and reduces ubiquinone-1 to ubisemiquinone by a one-electron transfer pathway. In Haemophilus influenzae (strain ATCC 51907 / DSM 11121 / KW20 / Rd), this protein is Na(+)-translocating NADH-quinone reductase subunit F.